We begin with the raw amino-acid sequence, 826 residues long: Homeobox-leucine zipper protein HDG5 (826 aa).

2 disordered regions span residues 1-34 and 69-119; these read MLTM…IQNP and EMME…HRHT. The segment covering 23-34 has biased composition (low complexity); it reads PSSSSPGTIQNP. Residues 88-105 show a composition bias toward basic and acidic residues; that stretch reads EDPKFGNESDVNELHDDE. Positions 110–119 are enriched in basic residues; that stretch reads AKKKRYHRHT. Residues 111 to 170 constitute a DNA-binding region (homeobox); sequence KKKRYHRHTNRQIQEMEALFKENPHPDDKQRKRLSAELGLKPRQVKFWFQNRRTQMKAQQ. Residues 165-189 adopt a coiled-coil conformation; it reads QMKAQQDRNENVMLRAENDNLKSEN. The 245-residue stretch at 314–558 folds into the START domain; it reads ADEEKVIAME…LQRQCERIAS (245 aa).

The protein belongs to the HD-ZIP homeobox family. Class IV subfamily. In terms of tissue distribution, expressed in shoot apical meristem (SAM) with higher levels in L1 cells and the epidermal layer of young leaves. Expressed in the L1 of apical inflorescence meristems, early flower primordia, carpel and stamen filament epidermis, ovule primordia, nucellus and chalaze.

The protein localises to the nucleus. In terms of biological role, probable transcription factor. Involved, together with PDF2, in the regulation of flower organs development by promoting the expression of APETALA 3 (AP3) in the epidermis and internal cell layers of developing flowers. This chain is Homeobox-leucine zipper protein HDG5, found in Arabidopsis thaliana (Mouse-ear cress).